We begin with the raw amino-acid sequence, 216 residues long: Endoplasmic reticulum vesicle protein 25 (216 aa).

A signal peptide spans 1-25; it reads MGSSRLAMRSALGLFFLLFVQISLA. At 26–185 the chain is on the lumenal side; sequence LKFDIAAGKG…TNESTNERVK (160 aa). The 91-residue stretch at 36–126 folds into the GOLD domain; it reads ERCIRNFVLK…HRSIELDVDI (91 aa). The helical transmembrane segment at 186-206 threads the bilayer; sequence WFAFGTMGMLVGLGVWQVIYL. Residues 207-216 lie on the Cytoplasmic side of the membrane; the sequence is RAYFRSKHLI.

This sequence belongs to the EMP24/GP25L family.

The protein resides in the endoplasmic reticulum membrane. It is found in the golgi apparatus membrane. Its function is as follows. Constituent of COPII-coated endoplasmic reticulum-derived transport vesicles. Required for efficient transport of a subset of secretory proteins to the Golgi. Facilitates retrograde transport from the Golgi to the endoplasmic reticulum. The chain is Endoplasmic reticulum vesicle protein 25 (erv25) from Emericella nidulans (strain FGSC A4 / ATCC 38163 / CBS 112.46 / NRRL 194 / M139) (Aspergillus nidulans).